Reading from the N-terminus, the 249-residue chain is 1-(5-phosphoribosyl)-5-[(5-phosphoribosylamino)methylideneamino] imidazole-4-carboxamide isomerase (249 aa).

The active-site Proton acceptor is the Asp10. Residue Asp136 is the Proton donor of the active site.

It belongs to the HisA/HisF family.

The protein localises to the cytoplasm. The catalysed reaction is 1-(5-phospho-beta-D-ribosyl)-5-[(5-phospho-beta-D-ribosylamino)methylideneamino]imidazole-4-carboxamide = 5-[(5-phospho-1-deoxy-D-ribulos-1-ylimino)methylamino]-1-(5-phospho-beta-D-ribosyl)imidazole-4-carboxamide. Its pathway is amino-acid biosynthesis; L-histidine biosynthesis; L-histidine from 5-phospho-alpha-D-ribose 1-diphosphate: step 4/9. The protein is 1-(5-phosphoribosyl)-5-[(5-phosphoribosylamino)methylideneamino] imidazole-4-carboxamide isomerase of Symbiobacterium thermophilum (strain DSM 24528 / JCM 14929 / IAM 14863 / T).